The primary structure comprises 378 residues: Cobalt-precorrin-5B C(1)-methyltransferase (378 aa).

This sequence belongs to the CbiD family.

The enzyme catalyses Co-precorrin-5B + S-adenosyl-L-methionine = Co-precorrin-6A + S-adenosyl-L-homocysteine. The protein operates within cofactor biosynthesis; adenosylcobalamin biosynthesis; cob(II)yrinate a,c-diamide from sirohydrochlorin (anaerobic route): step 6/10. Functionally, catalyzes the methylation of C-1 in cobalt-precorrin-5B to form cobalt-precorrin-6A. The protein is Cobalt-precorrin-5B C(1)-methyltransferase of Tolumonas auensis (strain DSM 9187 / NBRC 110442 / TA 4).